Here is a 142-residue protein sequence, read N- to C-terminus: Transcriptional regulator MraZ (142 aa).

2 consecutive SpoVT-AbrB domains span residues 5-47 (NYQH…TNQE) and 76-119 (SLTV…DINA).

Belongs to the MraZ family. In terms of assembly, forms oligomers.

It is found in the cytoplasm. The protein resides in the nucleoid. In Mycoplasmoides gallisepticum (strain R(low / passage 15 / clone 2)) (Mycoplasma gallisepticum), this protein is Transcriptional regulator MraZ.